An 87-amino-acid chain; its full sequence is Small ribosomal subunit protein bS20 (87 aa).

Residues Met-1–Lys-22 form a disordered region.

It belongs to the bacterial ribosomal protein bS20 family.

In terms of biological role, binds directly to 16S ribosomal RNA. This chain is Small ribosomal subunit protein bS20, found in Ruegeria sp. (strain TM1040) (Silicibacter sp.).